The primary structure comprises 211 residues: Ribosomal RNA small subunit methyltransferase G (211 aa).

S-adenosyl-L-methionine contacts are provided by residues glycine 76, leucine 81, valine 127–glutamate 128, and arginine 142.

The protein belongs to the methyltransferase superfamily. RNA methyltransferase RsmG family.

The protein resides in the cytoplasm. The enzyme catalyses guanosine(527) in 16S rRNA + S-adenosyl-L-methionine = N(7)-methylguanosine(527) in 16S rRNA + S-adenosyl-L-homocysteine. In terms of biological role, specifically methylates the N7 position of guanine in position 527 of 16S rRNA. The protein is Ribosomal RNA small subunit methyltransferase G of Vibrio campbellii (strain ATCC BAA-1116).